Reading from the N-terminus, the 404-residue chain is Cysteine desulfurase IscS (404 aa).

Residues alanine 75 to threonine 76, asparagine 155, glutamine 183, and serine 203 to histidine 205 each bind pyridoxal 5'-phosphate. N6-(pyridoxal phosphate)lysine is present on lysine 206. Threonine 243 contributes to the pyridoxal 5'-phosphate binding site. Residue cysteine 328 is the Cysteine persulfide intermediate of the active site. Residue cysteine 328 coordinates [2Fe-2S] cluster.

It belongs to the class-V pyridoxal-phosphate-dependent aminotransferase family. NifS/IscS subfamily. Homodimer. Forms a heterotetramer with IscU, interacts with other sulfur acceptors. It depends on pyridoxal 5'-phosphate as a cofactor.

It localises to the cytoplasm. It catalyses the reaction (sulfur carrier)-H + L-cysteine = (sulfur carrier)-SH + L-alanine. It participates in cofactor biosynthesis; iron-sulfur cluster biosynthesis. Its function is as follows. Master enzyme that delivers sulfur to a number of partners involved in Fe-S cluster assembly, tRNA modification or cofactor biosynthesis. Catalyzes the removal of elemental sulfur and selenium atoms from cysteine and selenocysteine to produce alanine. Functions as a sulfur delivery protein for Fe-S cluster synthesis onto IscU, an Fe-S scaffold assembly protein, as well as other S acceptor proteins. Also functions as a selenium delivery protein in the pathway for the biosynthesis of selenophosphate. This Salmonella paratyphi C (strain RKS4594) protein is Cysteine desulfurase IscS.